The following is a 315-amino-acid chain: Glycine--tRNA ligase alpha subunit (315 aa).

This sequence belongs to the class-II aminoacyl-tRNA synthetase family. As to quaternary structure, tetramer of two alpha and two beta subunits.

It localises to the cytoplasm. The enzyme catalyses tRNA(Gly) + glycine + ATP = glycyl-tRNA(Gly) + AMP + diphosphate. This is Glycine--tRNA ligase alpha subunit from Ectopseudomonas mendocina (strain ymp) (Pseudomonas mendocina).